Consider the following 359-residue polypeptide: Acyl-CoA Delta-9 desaturase (359 aa).

2 helical membrane-spanning segments follow: residues Val-51 to Ser-71 and Ile-74 to Gly-94. Fe cation is bound by residues His-96, His-101, His-133, His-136, and His-137. The short motif at His-96 to His-101 is the Histidine box-1 element. The Histidine box-2 signature appears at His-133 to His-137. Helical transmembrane passes span Tyr-194–Trp-214 and Trp-222–Ala-244. Fe cation contacts are provided by His-245, His-274, His-277, and His-278. Positions His-274–His-278 match the Histidine box-3 motif.

The protein belongs to the fatty acid desaturase type 1 family. It depends on Fe(2+) as a cofactor.

Its subcellular location is the membrane. The catalysed reaction is octadecanoyl-CoA + 2 Fe(II)-[cytochrome b5] + O2 + 2 H(+) = (9Z)-octadecenoyl-CoA + 2 Fe(III)-[cytochrome b5] + 2 H2O. It catalyses the reaction hexadecanoyl-CoA + 2 Fe(II)-[cytochrome b5] + O2 + 2 H(+) = (9Z)-hexadecenoyl-CoA + 2 Fe(III)-[cytochrome b5] + 2 H2O. In terms of biological role, catalyzes the formation of a Delta9 double bond, acting on saturated fatty acyl substrates like palmitoyl-CoA (hexadecanoyl-CoA) and stearoyl-CoA (octadecanoyl-CoA) with higher desaturation activity on octadecanoyl-CoA than hexadecanoyl-CoA. This is Acyl-CoA Delta-9 desaturase from Acheta domesticus (House cricket).